The sequence spans 120 residues: BLOC-1-related complex subunit 8 (120 aa).

Residues 101–120 are disordered; sequence MNTSAQGHSQEKLSPPPSLA. S109 carries the post-translational modification Phosphoserine.

The protein belongs to the BORCS8 family. In terms of assembly, component of the BLOC-one-related complex (BORC) which is composed of BLOC1S1, BLOC1S2, BORCS5, BORCS6, BORCS7, BORCS8, KXD1 and SNAPIN.

Its subcellular location is the lysosome membrane. In terms of biological role, as part of the BLOC-one-related complex (BORC), it plays a role in the movement and localization of lysosomes at the cell periphery. Associated with the cytosolic face of lysosomes, BORC recruits ARL8B to the lysosomal membrane and couples lysosomes to microtubule plus-end-directed kinesin motors, driving lysosome movement toward the cell periphery. In Mus musculus (Mouse), this protein is BLOC-1-related complex subunit 8.